The chain runs to 465 residues: Ribulose bisphosphate carboxylase large chain (465 aa).

The residue at position 4 (Lys4) is an N6,N6,N6-trimethyllysine. Substrate is bound by residues Asn113 and Thr163. Lys165 acts as the Proton acceptor in catalysis. Lys167 serves as a coordination point for substrate. 3 residues coordinate Mg(2+): Lys191, Asp193, and Glu194. At Lys191 the chain carries N6-carboxylysine. Residue His284 is the Proton acceptor of the active site. Substrate is bound by residues Arg285, His317, and Ser369.

The protein belongs to the RuBisCO large chain family. Type I subfamily. As to quaternary structure, heterohexadecamer of 8 large chains and 8 small chains; disulfide-linked. The disulfide link is formed within the large subunit homodimers. Mg(2+) serves as cofactor. In terms of processing, the disulfide bond which can form in the large chain dimeric partners within the hexadecamer appears to be associated with oxidative stress and protein turnover.

The protein localises to the plastid. It localises to the chloroplast. The catalysed reaction is 2 (2R)-3-phosphoglycerate + 2 H(+) = D-ribulose 1,5-bisphosphate + CO2 + H2O. The enzyme catalyses D-ribulose 1,5-bisphosphate + O2 = 2-phosphoglycolate + (2R)-3-phosphoglycerate + 2 H(+). In terms of biological role, ruBisCO catalyzes two reactions: the carboxylation of D-ribulose 1,5-bisphosphate, the primary event in carbon dioxide fixation, as well as the oxidative fragmentation of the pentose substrate in the photorespiration process. Both reactions occur simultaneously and in competition at the same active site. The protein is Ribulose bisphosphate carboxylase large chain of Cornus canadensis (Bunchberry dogwood).